Here is an 886-residue protein sequence, read N- to C-terminus: Coatomer subunit gamma (886 aa).

HEAT repeat units follow at residues 66 to 103 (VEAT…SSDE), 288 to 325 (RELT…THPM), 327 to 359 (VTNC…TGNE), 360 to 397 (SSVE…KFPL), and 472 to 509 (SDPS…MVES). Positions 592–613 (SQPLAEKKAQGKKPTGLGAPPA) are disordered.

It belongs to the COPG family. Oligomeric complex that consists of at least the alpha, beta, beta', gamma, delta, epsilon and zeta subunits.

Its subcellular location is the cytoplasm. It is found in the golgi apparatus membrane. It localises to the cytoplasmic vesicle. The protein resides in the COPI-coated vesicle membrane. Its function is as follows. The coatomer is a cytosolic protein complex that binds to dilysine motifs and reversibly associates with Golgi non-clathrin-coated vesicles, which further mediate biosynthetic protein transport from the ER, via the Golgi up to the trans Golgi network. Coatomer complex is required for budding from Golgi membranes, and is essential for the retrograde Golgi-to-ER transport of dilysine-tagged proteins. This Arabidopsis thaliana (Mouse-ear cress) protein is Coatomer subunit gamma.